The chain runs to 312 residues: Malate dehydrogenase (312 aa).

Residues 7-13 (GAAGGIG) and Asp-34 contribute to the NAD(+) site. Residues Arg-81 and Arg-87 each coordinate substrate. NAD(+)-binding positions include Asn-94 and 117-119 (ITN). Substrate contacts are provided by Asn-119 and Arg-153. The Proton acceptor role is filled by His-177. Met-227 contributes to the NAD(+) binding site.

Belongs to the LDH/MDH superfamily. MDH type 1 family. In terms of assembly, homodimer.

The catalysed reaction is (S)-malate + NAD(+) = oxaloacetate + NADH + H(+). Its function is as follows. Catalyzes the reversible oxidation of malate to oxaloacetate. The chain is Malate dehydrogenase from Escherichia coli (strain 55989 / EAEC).